A 226-amino-acid polypeptide reads, in one-letter code: Large ribosomal subunit protein uL1 (226 aa).

The protein belongs to the universal ribosomal protein uL1 family. As to quaternary structure, part of the 50S ribosomal subunit.

Binds directly to 23S rRNA. The L1 stalk is quite mobile in the ribosome, and is involved in E site tRNA release. In terms of biological role, protein L1 is also a translational repressor protein, it controls the translation of the L11 operon by binding to its mRNA. The chain is Large ribosomal subunit protein uL1 from Borreliella burgdorferi (strain ATCC 35210 / DSM 4680 / CIP 102532 / B31) (Borrelia burgdorferi).